We begin with the raw amino-acid sequence, 154 residues long: Deoxyuridine 5'-triphosphate nucleotidohydrolase (154 aa).

Substrate-binding positions include 72 to 74 (RSG), Asn-85, 89 to 91 (LID), and Met-99.

The protein belongs to the dUTPase family. Requires Mg(2+) as cofactor.

The catalysed reaction is dUTP + H2O = dUMP + diphosphate + H(+). Its pathway is pyrimidine metabolism; dUMP biosynthesis; dUMP from dCTP (dUTP route): step 2/2. This enzyme is involved in nucleotide metabolism: it produces dUMP, the immediate precursor of thymidine nucleotides and it decreases the intracellular concentration of dUTP so that uracil cannot be incorporated into DNA. In Psychrobacter cryohalolentis (strain ATCC BAA-1226 / DSM 17306 / VKM B-2378 / K5), this protein is Deoxyuridine 5'-triphosphate nucleotidohydrolase.